A 97-amino-acid chain; its full sequence is MKIRPLHDRVIVKRKEVESKSSGGIVLTGSAAGKSTRGEVLAVGHGRVLENGGIKALDVRVGDTIIFNDGYGVKVEKIDNEEVLIMSENDILAIVEK.

This sequence belongs to the GroES chaperonin family. As to quaternary structure, heptamer of 7 subunits arranged in a ring. Interacts with the chaperonin GroEL.

It is found in the cytoplasm. Functionally, together with the chaperonin GroEL, plays an essential role in assisting protein folding. The GroEL-GroES system forms a nano-cage that allows encapsulation of the non-native substrate proteins and provides a physical environment optimized to promote and accelerate protein folding. GroES binds to the apical surface of the GroEL ring, thereby capping the opening of the GroEL channel. In Blochmanniella floridana, this protein is Co-chaperonin GroES.